A 458-amino-acid polypeptide reads, in one-letter code: MDRRIYGGSAVIHLFLFFSVLIFSAASALSKNQSPSSGSGQINSNSVLVALLDSRYTELAELVEKALLLQTLEDAVGRHNITIFAPRNEALERDLDPEFKRFLLEPGNLKSLQTLLMFHIIPNRVGSNQWPSEESGRVKHHTLGNDQVRLSNGQGKKMVDLAEIIRPDDLTRPDGLIHGIERLLIPRSVQEDFNRRRSLQSISAVLPEGAPEVDPRTNRLKKPAAPVPAGSPPALPIQSAMAPGPSLAPAPAPGPGGKQHHFDGEAQVKDFIHTLLHYGGYNEMADILVNLTSLATEMGRLVSEGYVLTVLAPNDEAMAKLTTDQLSEPGAPEQIVYYHIIPEYQTEESMYNSVRRFGKVKFDTLRFPHKVAAKEADGSVKFGDGEKSAYLFDPDIYTDGRISVQGIDGVLFPQEEEVVESVKKPVKKIVQPRRGKLLEVACSMLGAFGKDTYLSKCR.

Residues 1–30 (MDRRIYGGSAVIHLFLFFSVLIFSAASALS) form the signal peptide. Residues 43–184 (NSNSVLVALL…GLIHGIERLL (142 aa)) form the FAS1 1 domain. Residue Asn-80 is glycosylated (N-linked (GlcNAc...) asparagine). The interval 207-262 (PEGAPEVDPRTNRLKKPAAPVPAGSPPALPIQSAMAPGPSLAPAPAPGPGGKQHHF) is disordered. Positions 225 to 235 (APVPAGSPPAL) are enriched in pro residues. The region spanning 268 to 411 (VKDFIHTLLH…ISVQGIDGVL (144 aa)) is the FAS1 2 domain. Residue Asn-290 is glycosylated (N-linked (GlcNAc...) asparagine).

The protein belongs to the fasciclin-like AGP family.

The protein localises to the secreted. Its function is as follows. May be a cell surface adhesion protein. This is Fasciclin-like arabinogalactan protein 17 (FLA17) from Arabidopsis thaliana (Mouse-ear cress).